The primary structure comprises 170 residues: MRHNRHINHLGRTHSHRKALLSNMAVSLIKHKRIFTTLAKAKEFCKYVEPILTRSRNDTTHSRRLVFRKLCDKYAVSELFREIARKIGDRPGGYTRIIKIGNRLGDNAATCFIELVDYNELMLKTAHGGATNKIRRSRRSSPHKRDINERNNIIQEDNAMTKTIEEAKGE.

It belongs to the bacterial ribosomal protein bL17 family. As to quaternary structure, part of the 50S ribosomal subunit. Contacts protein L32.

This Azobacteroides pseudotrichonymphae genomovar. CFP2 protein is Large ribosomal subunit protein bL17.